We begin with the raw amino-acid sequence, 287 residues long: Eukaryotic translation initiation factor 3 subunit G (287 aa).

Disordered stretches follow at residues 1 to 34 and 159 to 184; these read MSKL…KDGT and TAGG…YVPP. One can recognise an RRM domain in the interval 207-285; that stretch reads ATLRVTNVSE…LILRVEFAKR (79 aa).

It belongs to the eIF-3 subunit G family. As to quaternary structure, component of the eukaryotic translation initiation factor 3 (eIF-3) complex.

The protein localises to the cytoplasm. Functionally, RNA-binding component of the eukaryotic translation initiation factor 3 (eIF-3) complex, which is involved in protein synthesis of a specialized repertoire of mRNAs and, together with other initiation factors, stimulates binding of mRNA and methionyl-tRNAi to the 40S ribosome. The eIF-3 complex specifically targets and initiates translation of a subset of mRNAs involved in cell proliferation. This subunit can bind 18S rRNA. The protein is Eukaryotic translation initiation factor 3 subunit G (tif35) of Aspergillus oryzae (strain ATCC 42149 / RIB 40) (Yellow koji mold).